The following is a 315-amino-acid chain: Long form salivary protein D7L2 (315 aa).

The N-terminal stretch at 1–18 (MIVAPVVLSIFLQLFVQA) is a signal peptide. 4 disulfides stabilise this stretch: C37–C73, C69–C128, C178–C211, and C252–C263.

This sequence belongs to the PBP/GOBP family. Interacts with host coagulation factor XII/F12 (inactive and activated). Interacts with host coagulation factor XI/F11 (inactive).

It is found in the secreted. In terms of biological role, modulates blood feeding of female mosquitoes on vertebrate species by binding and sequestering different mediators involved in the host response. Binds leukotriene B4 and leukotriene D4. Exhibits anticoagulant activity targeting the intrinsic coagulation pathway; binds coagulation factors XII and XI, preventing generation of activated FXIIa and FXIa. This chain is Long form salivary protein D7L2, found in Anopheles gambiae (African malaria mosquito).